The following is a 199-amino-acid chain: Translation initiation factor IF-3 (199 aa).

Belongs to the IF-3 family. In terms of assembly, monomer.

It is found in the cytoplasm. IF-3 binds to the 30S ribosomal subunit and shifts the equilibrium between 70S ribosomes and their 50S and 30S subunits in favor of the free subunits, thus enhancing the availability of 30S subunits on which protein synthesis initiation begins. This chain is Translation initiation factor IF-3, found in Mycoplasmopsis pulmonis (strain UAB CTIP) (Mycoplasma pulmonis).